Reading from the N-terminus, the 493-residue chain is GPI alpha-1,6-mannosyltransferase 2 (493 aa).

At 1 to 13 (MGLLDPSQKEVLR) the chain is on the cytoplasmic side. The helical transmembrane segment at 14 to 34 (FAVNCRILTLVLQALFNLIIP) threads the bilayer. The Lumenal segment spans residues 35–77 (DHHADAFCPPRLAPSGSADQLVEGLLGGLSRWDAEHFLFIAEH). The helical transmembrane segment at 78-98 (GYLYEHNFAFFPGFPLALLMG) threads the bilayer. The Cytoplasmic segment spans residues 99 to 113 (TELLRPLQGLLSQRS). A helical transmembrane segment spans residues 114 to 134 (CLLVSVALLNLLFSVLAAVAL). Residues 135-136 (HD) lie on the Lumenal side of the membrane. A helical membrane pass occupies residues 137-157 (LGCLVLHCPRQALCAALLFCI). Topologically, residues 158–161 (SPAN) are cytoplasmic. A helical transmembrane segment spans residues 162–182 (VFLAAGYSEALFAFLTFSAMG). Residues 183 to 192 (QLERGRGWAS) lie on the Lumenal side of the membrane. Residues 193–213 (GLLFALAAGVRSNGLVSLGFL) form a helical membrane-spanning segment. Topologically, residues 214-234 (LHSQCRGFCSSLAVLSPWKPL) are cytoplasmic. Residues 235 to 255 (VKLMASVCLSVLIVSLPFALF) form a helical membrane-spanning segment. At 256–327 (QYRAYIQFCS…RYYELKQVPN (72 aa)) the chain is on the lumenal side. A helical transmembrane segment spans residues 328-348 (FLLATPVTVLVVWATWTYVTT). Over 349–378 (HPWLCLTLGLQRTKDRENPEKPHRGFLSPK) the chain is Cytoplasmic. Residues 379–399 (VFVYLVHAAALLVFGGLCMHV) traverse the membrane as a helical segment. Over 400 to 469 (QVLTRFLASS…DWKRCSPVTR (70 aa)) the chain is Lumenal. The helical transmembrane segment at 470–490 (CVLVYFLTYWLLGLILHCNFL) threads the bilayer. Topologically, residues 491–493 (PWT) are cytoplasmic.

Belongs to the PIGV family. Not N-glycosylated.

Its subcellular location is the endoplasmic reticulum membrane. It participates in glycolipid biosynthesis; glycosylphosphatidylinositol-anchor biosynthesis. Alpha-1,6-mannosyltransferase that catalyzes the transfer of the second mannose, via an alpha-1,6 bond, from a dolichol-phosphate-mannose (Dol-P-Man) to the alpha-D-Man-(1-&gt;4)-alpha-D-GlcN-(1-&gt;6)-(1-radyl,2-acyl-sn-glycero-3-phospho)-2-acyl-inositol (also termed H2) intermediate to generate an alpha-D-Man-(1-&gt;6)-alpha-D-Man-(1-&gt;4)-alpha-D-GlcN-(1-&gt;6)-(1-radyl,2-acyl-sn-glycero-3-phospho)-2-acyl-inositol (also termed H3) and participates in the seventh step of the glycosylphosphatidylinositol-anchor biosynthesis. Also transfers the second mannose on a 2-PEtn-alpha-D-Man-(1-&gt;4)-alpha-D-GlcN-(1-&gt;6)-(1-radyl,2-acyl-sn-glycero-3-phospho)-2-acyl-inositol (also termed H5). This Mus musculus (Mouse) protein is GPI alpha-1,6-mannosyltransferase 2.